We begin with the raw amino-acid sequence, 330 residues long: Probable L-lactate dehydrogenase (330 aa).

3 residues coordinate substrate: R105, N137, and R168. Residue N137 participates in NAD(+) binding. H192 (proton acceptor) is an active-site residue.

Belongs to the LDH/MDH superfamily. LDH family. In terms of assembly, homotetramer.

The protein resides in the cytoplasm. It carries out the reaction (S)-lactate + NAD(+) = pyruvate + NADH + H(+). It functions in the pathway fermentation; pyruvate fermentation to lactate; (S)-lactate from pyruvate: step 1/1. In Schizosaccharomyces pombe (strain 972 / ATCC 24843) (Fission yeast), this protein is Probable L-lactate dehydrogenase.